A 296-amino-acid polypeptide reads, in one-letter code: Probable endonuclease 4 (296 aa).

The Zn(2+) site is built by His68, His109, Glu144, Asp178, His181, His213, Asp226, His228, and Glu258.

Belongs to the AP endonuclease 2 family. It depends on Zn(2+) as a cofactor.

It catalyses the reaction Endonucleolytic cleavage to 5'-phosphooligonucleotide end-products.. Functionally, endonuclease IV plays a role in DNA repair. It cleaves phosphodiester bonds at apurinic or apyrimidinic (AP) sites, generating a 3'-hydroxyl group and a 5'-terminal sugar phosphate. This Staphylococcus aureus (strain Mu3 / ATCC 700698) protein is Probable endonuclease 4.